A 283-amino-acid chain; its full sequence is uncharacterized protein (283 aa).

The HTH rpiR-type domain maps to 3 to 79; it reads TGGLAIIQSM…MRVAGDLAKP (77 aa). The segment at residues 39–58 is a DNA-binding region (H-T-H motif); that stretch reads VNEISALANSSDAAVIRLCK. The region spanning 123–264 is the SIS domain; the sequence is AVSLLLKAHT…FLGMAAEQYE (142 aa).

This is an uncharacterized protein from Bacillus subtilis (strain 168).